Consider the following 374-residue polypeptide: Queuine tRNA-ribosyltransferase (374 aa).

The active-site Proton acceptor is the Asp-94. Substrate is bound by residues 94–98, Asp-148, Gln-191, and Gly-218; that span reads DSGGF. Residues 249-255 are RNA binding; the sequence is GVGSPDY. Asp-268 (nucleophile) is an active-site residue. The interval 273-277 is RNA binding; important for wobble base 34 recognition; that stretch reads TRIGR. Zn(2+)-binding residues include Cys-306, Cys-308, Cys-311, and His-337.

Belongs to the queuine tRNA-ribosyltransferase family. Homodimer. Within each dimer, one monomer is responsible for RNA recognition and catalysis, while the other monomer binds to the replacement base PreQ1. It depends on Zn(2+) as a cofactor.

The enzyme catalyses 7-aminomethyl-7-carbaguanine + guanosine(34) in tRNA = 7-aminomethyl-7-carbaguanosine(34) in tRNA + guanine. The protein operates within tRNA modification; tRNA-queuosine biosynthesis. Catalyzes the base-exchange of a guanine (G) residue with the queuine precursor 7-aminomethyl-7-deazaguanine (PreQ1) at position 34 (anticodon wobble position) in tRNAs with GU(N) anticodons (tRNA-Asp, -Asn, -His and -Tyr). Catalysis occurs through a double-displacement mechanism. The nucleophile active site attacks the C1' of nucleotide 34 to detach the guanine base from the RNA, forming a covalent enzyme-RNA intermediate. The proton acceptor active site deprotonates the incoming PreQ1, allowing a nucleophilic attack on the C1' of the ribose to form the product. After dissociation, two additional enzymatic reactions on the tRNA convert PreQ1 to queuine (Q), resulting in the hypermodified nucleoside queuosine (7-(((4,5-cis-dihydroxy-2-cyclopenten-1-yl)amino)methyl)-7-deazaguanosine). The chain is Queuine tRNA-ribosyltransferase from Acetivibrio thermocellus (strain ATCC 27405 / DSM 1237 / JCM 9322 / NBRC 103400 / NCIMB 10682 / NRRL B-4536 / VPI 7372) (Clostridium thermocellum).